The chain runs to 587 residues: ATP-dependent zinc metalloprotease FtsH 2 (587 aa).

The Cytoplasmic segment spans residues 1–12; the sequence is MSSDRTREVTKR. A helical membrane pass occupies residues 13–33; that stretch reads ILMVLFGLWLLQFFFLPPLTT. Residues 34–102 lie on the Extracellular side of the membrane; that stretch reads RPTELSYSAF…EQRYEVTRTP (69 aa). The chain crosses the membrane as a helical span at residues 103-123; it reads WWVTLLPTVLWLAVMVGLFAW. Over 124-587 the chain is Cytoplasmic; sequence AQKRQAGAFG…GDDVRRILSA (464 aa). 192–199 is a binding site for ATP; that stretch reads GPPGTGKT. A Zn(2+)-binding site is contributed by His416. Residue Glu417 is part of the active site. Zn(2+) contacts are provided by His420 and Asp492.

In the central section; belongs to the AAA ATPase family. It in the C-terminal section; belongs to the peptidase M41 family. Homohexamer. Zn(2+) serves as cofactor.

The protein resides in the cell membrane. Its function is as follows. Acts as a processive, ATP-dependent zinc metallopeptidase for both cytoplasmic and membrane proteins. Plays a role in the quality control of integral membrane proteins. This chain is ATP-dependent zinc metalloprotease FtsH 2, found in Symbiobacterium thermophilum (strain DSM 24528 / JCM 14929 / IAM 14863 / T).